Reading from the N-terminus, the 351-residue chain is Formyl peptide receptor-related sequence 1 (351 aa).

Over 1-27 the chain is Extracellular; sequence METNYSIPLNGSDVVIYDSTISRVLWI. Asn-4 and Asn-10 each carry an N-linked (GlcNAc...) asparagine glycan. The chain crosses the membrane as a helical span at residues 28–50; sequence LSMVVVSITFFLGVLGNGLVIWV. Residues 51–61 lie on the Cytoplasmic side of the membrane; the sequence is AGFRMPHTVTT. Residues 62-83 form a helical membrane-spanning segment; the sequence is IWYLNLALADFSFTATLPFLLV. Over 84-100 the chain is Extracellular; that stretch reads EMAMKEKWPFGWFLCKL. An intrachain disulfide couples Cys-98 to Cys-176. The helical transmembrane segment at 101–121 threads the bilayer; it reads VHIAVDVNLFGSVFLIAVIAL. Over 122–140 the chain is Cytoplasmic; sequence DRCICVLHPVWAQNHRTVS. A helical transmembrane segment spans residues 141 to 162; that stretch reads LARNVVVGSWIFALILTLPLFL. Topologically, residues 163–205 are extracellular; sequence FLTTVRDARGDVHCRLSFVSWGNSVEERLNTAITFVTTRGIIR. The chain crosses the membrane as a helical span at residues 206 to 226; sequence FIVSFSLPMSFVAICYGLITT. The Cytoplasmic portion of the chain corresponds to 227–242; sequence KIHKKAFVNSSRPFRV. Residues 243–266 form a helical membrane-spanning segment; it reads LTGVVASFFICWFPFQLVALLGTV. At 267 to 286 the chain is on the extracellular side; it reads WLKEMQFSGSYKIIGRLVNP. The helical transmembrane segment at 287–306 threads the bilayer; that stretch reads TSSLAFFNSCLNPILYVFMG. Over 307–351 the chain is Cytoplasmic; the sequence is QDFQERLIHSLSSRLQRALSEDSGHISDTRTNLASLPEDIEIKAI.

This sequence belongs to the G-protein coupled receptor 1 family. In terms of tissue distribution, expressed exclusively in vomeronasal neurons. Expressed in 0.6 % of a subset of sensory neurons located in the basal layer of the vomeronasal organ. Each neuron appears to express only one receptor gene. Expressed mostly in neutrophils, followed by spleen and lung and expressed at very low levels in heart and liver.

It localises to the cell membrane. Low affinity receptor for N-formyl-methionyl peptides. Receptor for lipoxin A4. May have an olfactory function associated with the identification of pathogens or of pathogenic states. The chain is Formyl peptide receptor-related sequence 1 (Fpr-s1) from Mus musculus (Mouse).